Here is a 404-residue protein sequence, read N- to C-terminus: Cysteine desulfurase IscS (404 aa).

Residues 75–76 (AT), N155, Q183, and 203–205 (SAH) each bind pyridoxal 5'-phosphate. K206 bears the N6-(pyridoxal phosphate)lysine mark. T243 contributes to the pyridoxal 5'-phosphate binding site. The active-site Cysteine persulfide intermediate is C328. C328 lines the [2Fe-2S] cluster pocket.

It belongs to the class-V pyridoxal-phosphate-dependent aminotransferase family. NifS/IscS subfamily. In terms of assembly, homodimer. Forms a heterotetramer with IscU, interacts with other sulfur acceptors. The cofactor is pyridoxal 5'-phosphate.

The protein resides in the cytoplasm. The catalysed reaction is (sulfur carrier)-H + L-cysteine = (sulfur carrier)-SH + L-alanine. It functions in the pathway cofactor biosynthesis; iron-sulfur cluster biosynthesis. Functionally, master enzyme that delivers sulfur to a number of partners involved in Fe-S cluster assembly, tRNA modification or cofactor biosynthesis. Catalyzes the removal of elemental sulfur atoms from cysteine to produce alanine. Functions as a sulfur delivery protein for Fe-S cluster synthesis onto IscU, an Fe-S scaffold assembly protein, as well as other S acceptor proteins. The polypeptide is Cysteine desulfurase IscS (Vibrio cholerae serotype O1 (strain ATCC 39541 / Classical Ogawa 395 / O395)).